We begin with the raw amino-acid sequence, 374 residues long: MSRVPSPPPPAEMSSGPVAESWCYTQIKVVKFSYMWTINNFSFCREEMGEVIKSSTFSSGANDKLKWCLRVNPKGLDEESKDYLSLYLLLVSCPKSEVRAKFKFSILNAKGEETKAMESQRAYRFVQGKDWGFKKFIRRDFLLDEANGLLPDDKLTLFCEVSVVQDSVNISGQNTMNMVKVPECRLSDELGGLWENSRFTDCCLCVAGQEFQAHKAILAARSPVFSAMFEHEMEESKKNRVEIKDVEPDVFKEMMCFIYTGKASNLDKMADDLLAAADKYALERLKVMCEEALCSNLSVENAAEILILADLHSADQLKTQAVDFINYHASDVMETSGWKSMVVSHPHLVAEAYRSLASAQCPFLGPPRKRLKQS.

The 131-residue stretch at 31 to 161 (KFSYMWTINN…DDKLTLFCEV (131 aa)) folds into the MATH domain. Positions 71-191 (VNPKGLDEES…PECRLSDELG (121 aa)) are required for nuclear localization. The 125-residue stretch at 173–297 (QNTMNMVKVP…MCEEALCSNL (125 aa)) folds into the BTB domain. The interval 297–355 (LSVENAAEILILADLHSADQLKTQAVDFINYHASDVMETSGWKSMVVSHPHLVAEAYRS) is homodimerization.

It belongs to the Tdpoz family. Homodimer. Part of cullin-RING-based BCR (BTB-CUL3-RBX1) E3 ubiquitin-protein ligase complexes that contain CUL3 and SPOP, plus a target protein.

The protein localises to the nucleus. The protein resides in the nucleus speckle. It participates in protein modification; protein ubiquitination. Component of a cullin-RING-based BCR (BTB-CUL3-RBX1) E3 ubiquitin-protein ligase complex that mediates the ubiquitination of target proteins, leading most often to their proteasomal degradation. This Xenopus laevis (African clawed frog) protein is Speckle-type POZ protein B (spop-b).